The primary structure comprises 399 residues: Syndecan (399 aa).

A signal peptide spans 1-28; that stretch reads MKPKQKISVEPLLLVAILIGVLVAATHA. The tract at residues 28–319 is disordered; that stretch reads AQDQKSVKPS…TKGIDHRPNG (292 aa). Topologically, residues 29-340 are extracellular; sequence QDQKSVKPSA…TSSFFSQPGI (312 aa). Residues 36-46 are compositionally biased toward low complexity; it reads PSAAAPSAAAS. The O-linked (Xyl...) (glycosaminoglycan) serine glycan is linked to S62. Basic and acidic residues predominate over residues 67–77; sequence GIHEDLEKDPD. S79, S81, and S110 each carry an O-linked (Xyl...) (glycosaminoglycan) serine glycan. Residues 99-116 are compositionally biased toward polar residues; the sequence is SHNTRISQSSNSGINTAH. Residues 117–172 are compositionally biased toward low complexity; it reads TPTQTSSTIPTTSTSTPMPTTTPTATTPASTTTAAATQISSFANSSSTTTTTLAPT. N-linked (GlcNAc...) asparagine glycosylation is present at N160. Over residues 191 to 214 the composition is skewed to acidic residues; that stretch reads TESSGDGIDADAEDDDEDDGDDKD. O-linked (Xyl...) (glycosaminoglycan) serine glycosylation occurs at S194. Residues 215 to 226 are compositionally biased toward basic and acidic residues; that stretch reads YDYNKELDKEID. Residues 253-270 are compositionally biased toward acidic residues; the sequence is DEIDVDGGDEDDNGDSDI. Polar residues predominate over residues 299-309; the sequence is PNTNVNSQPSD. Residues 341-365 form a helical membrane-spanning segment; it reads LAAVIGGAVVGLLCAILVVMFIVYR. The Cytoplasmic segment spans residues 366 to 399; that stretch reads MRKKDEGSYALDEPKRSPANNSYAKNANNREFYA. The interval 373 to 399 is disordered; the sequence is SYALDEPKRSPANNSYAKNANNREFYA. The span at 383-399 shows a compositional bias: polar residues; sequence PANNSYAKNANNREFYA.

The protein belongs to the syndecan proteoglycan family. As to expression, in 13-16 hours embryos, expressed in lymph glands, peripheral and central nervous system and basal surfaces of gut epithelia. Sdc and robo are coexpressed in domains adjacent to slit; in tracheal pits and midline glia cells.

It is found in the membrane. Cell surface proteoglycan that bears heparan sulfate. Required for axonal and myotube guidance, is a necessary component of slit/robo signaling and is required in the slit target cells. The chain is Syndecan (Sdc) from Drosophila melanogaster (Fruit fly).